A 295-amino-acid chain; its full sequence is Tyrosine recombinase XerC (295 aa).

One can recognise a Core-binding (CB) domain in the interval 1–85 (MLTALNRYWD…ALRRFLSFLV (85 aa)). The Tyr recombinase domain maps to 106 to 285 (HLPKNMDGEQ…NFQHLAEVYD (180 aa)). Residues Arg145, Lys169, His237, Arg240, and His263 contribute to the active site. Residue Tyr272 is the O-(3'-phospho-DNA)-tyrosine intermediate of the active site.

Belongs to the 'phage' integrase family. XerC subfamily. Forms a cyclic heterotetrameric complex composed of two molecules of XerC and two molecules of XerD.

Its subcellular location is the cytoplasm. Functionally, site-specific tyrosine recombinase, which acts by catalyzing the cutting and rejoining of the recombining DNA molecules. The XerC-XerD complex is essential to convert dimers of the bacterial chromosome into monomers to permit their segregation at cell division. It also contributes to the segregational stability of plasmids. The sequence is that of Tyrosine recombinase XerC from Haemophilus influenzae (strain PittEE).